The chain runs to 65 residues: Omega-lycotoxin-Am1f (65 aa).

Positions 1 to 18 (GDEEDEVEETLPVAEEGR) are excised as a propeptide. 4 disulfides stabilise this stretch: C22–C37, C29–C42, C36–C62, and C44–C60.

This sequence belongs to the neurotoxin omega-lctx family. In terms of tissue distribution, expressed by the venom gland.

It localises to the secreted. Its function is as follows. Modulates Cav2.1/CACNA1A voltage-gated calcium channels (P/Q-type currents) in rat cerebellar Purkinje cells and hippocampal CA1-CA3 neurons. At saturating concentrations (&gt;10 nM) decelerates activation kinetics and slightly increases peak amplitude without affecting deactivation kinetics. In vivo, does not cause death when intravenously injected into mice. In rat models, through its activity on Cav2.1/CACNA1A, has an ameliorative effect on memory defects provoked by hyperstimulation of N-methyl-D-aspartate receptors (NMDARs) in the hippocampus. This Alopecosa marikovskyi (Wolf spider) protein is Omega-lycotoxin-Am1f.